A 255-amino-acid polypeptide reads, in one-letter code: tRNA1(Val) (adenine(37)-N6)-methyltransferase (255 aa).

This sequence belongs to the methyltransferase superfamily. tRNA (adenine-N(6)-)-methyltransferase family.

It is found in the cytoplasm. The catalysed reaction is adenosine(37) in tRNA1(Val) + S-adenosyl-L-methionine = N(6)-methyladenosine(37) in tRNA1(Val) + S-adenosyl-L-homocysteine + H(+). In terms of biological role, specifically methylates the adenine in position 37 of tRNA(1)(Val) (anticodon cmo5UAC). This chain is tRNA1(Val) (adenine(37)-N6)-methyltransferase, found in Porphyromonas gingivalis (strain ATCC 33277 / DSM 20709 / CIP 103683 / JCM 12257 / NCTC 11834 / 2561).